The following is a 236-amino-acid chain: Small ribosomal subunit protein uS2c (236 aa).

The protein belongs to the universal ribosomal protein uS2 family.

Its subcellular location is the plastid. It localises to the chloroplast. The protein is Small ribosomal subunit protein uS2c (rps2) of Physcomitrium patens (Spreading-leaved earth moss).